The following is a 288-amino-acid chain: MAGAKEIRNKIGSVKSTQKITKAMEMVAASKMRRSQESMEASRPYADTMRKVIGHLALGNLEYRHPYLEEREAKRVGYIVISSDRGLCGGLNINLFKKVMTEMKTWSEDGVEIDLAVIGSKATAFFNSYGGNVVAQNSGLGDHPSLEELIGTVGVMLKKYDEGQLDRLYVVNNKFINTMVQEPAIEQLLPLPKSEDEAMQRTHAWDYIYEPEPKPLLDALLVRYVESQVYQGVVENLACEHVARMIAMKAATDNAGDIIDELQLVYNKARQAAITQELSEIVSGASAV.

This sequence belongs to the ATPase gamma chain family. As to quaternary structure, F-type ATPases have 2 components, CF(1) - the catalytic core - and CF(0) - the membrane proton channel. CF(1) has five subunits: alpha(3), beta(3), gamma(1), delta(1), epsilon(1). CF(0) has three main subunits: a, b and c.

It is found in the cell inner membrane. Produces ATP from ADP in the presence of a proton gradient across the membrane. The gamma chain is believed to be important in regulating ATPase activity and the flow of protons through the CF(0) complex. This is ATP synthase gamma chain from Aliivibrio fischeri (strain ATCC 700601 / ES114) (Vibrio fischeri).